The sequence spans 629 residues: tRNA uridine 5-carboxymethylaminomethyl modification enzyme MnmG (629 aa).

Residues 13 to 18 (GGGHAG), Val125, and Ser180 contribute to the FAD site. NAD(+) is bound at residue 273-287 (GPRYCPSIEDKVMRF). FAD is bound at residue Gln370.

It belongs to the MnmG family. Homodimer. Heterotetramer of two MnmE and two MnmG subunits. It depends on FAD as a cofactor.

It is found in the cytoplasm. Its function is as follows. NAD-binding protein involved in the addition of a carboxymethylaminomethyl (cmnm) group at the wobble position (U34) of certain tRNAs, forming tRNA-cmnm(5)s(2)U34. This is tRNA uridine 5-carboxymethylaminomethyl modification enzyme MnmG from Salmonella arizonae (strain ATCC BAA-731 / CDC346-86 / RSK2980).